Consider the following 184-residue polypeptide: Glutathione-regulated potassium-efflux system ancillary protein KefG (184 aa).

It belongs to the NAD(P)H dehydrogenase (quinone) family. KefG subfamily. As to quaternary structure, interacts with KefB.

Its subcellular location is the cell inner membrane. It carries out the reaction a quinone + NADH + H(+) = a quinol + NAD(+). The enzyme catalyses a quinone + NADPH + H(+) = a quinol + NADP(+). Its function is as follows. Regulatory subunit of a potassium efflux system that confers protection against electrophiles. Required for full activity of KefB. This is Glutathione-regulated potassium-efflux system ancillary protein KefG from Escherichia coli O1:K1 / APEC.